Consider the following 680-residue polypeptide: MVPGVPGAVLTLCLWLAASSGCLAAGPGAAAARRLDESLSAGSVQRARCASRCLSLQITRISAFFQHFQNNGSLVWCQNHKQCSKCLEPCKESGDLRKHQCQSFCEPLFPKKSYECLTSCEFLKYILLVKQGDCPAPEKASGFAAACVESCEVDNECSGVKKCCSNGCGHTCQVPKTLYKGVPLKPRKELRFTELQSGQLEVKWSSKFNISIEPVIYVVQRRWNYGIHPSEDDATHWQTVAQTTDERVQLTDIRPSRWYQFRVAAVNVHGTRGFTAPSKHFRSSKDPSAPPAPANLRLANSTVNSDGSVTVTIVWDLPEEPDIPVHHYKVFWSWMVSSKSLVPTKKKRRKTTDGFQNSVILEKLQPDCDYVVELQAITYWGQTRLKSAKVSLHFTSTHATNNKEQLVKTRKGGIQTQLPFQRRRPTRPLEVGAPFYQDGQLQVKVYWKKTEDPTVNRYHVRWFPEACAHNRTTGSEASSGMTHENYIILQDLSFSCKYKVTVQPIRPKSHSKAEAVFFTTPPCSALKGKSHKPVGCLGEAGHVLSKVLAKPENLSASFIVQDVNITGHFSWKMAKANLYQPMTGFQVTWAEVTTESRQNSLPNSIISQSQILPSDHYVLTVPNLRPSTLYRLEVQVLTPGGEGPATIKTFRTPELPPSSAHRSHLKHRHPHHYKPSPERY.

Positions 1–24 (MVPGVPGAVLTLCLWLAASSGCLA) are cleaved as a signal peptide. Intrachain disulfides connect Cys49-Cys83, Cys53-Cys77, Cys86-Cys105, Cys90-Cys101, and Cys116-Cys120. The N-linked (GlcNAc...) asparagine glycan is linked to Asn71. The 50-residue stretch at 127-176 (LLVKQGDCPAPEKASGFAAACVESCEVDNECSGVKKCCSNGCGHTCQVPK) folds into the WAP domain. Fibronectin type-III domains follow at residues 186-287 (PRKE…SKDP), 292-400 (APAN…THAT), 425-523 (PTRP…TPPC), and 550-658 (KPEN…LPPS). N-linked (GlcNAc...) asparagine glycosylation is found at Asn209, Asn300, Asn470, Asn553, and Asn564. The disordered stretch occupies residues 642 to 680 (EGPATIKTFRTPELPPSSAHRSHLKHRHPHHYKPSPERY). Over residues 661 to 674 (HRSHLKHRHPHHYK) the composition is skewed to basic residues.

As to quaternary structure, interacts with FGFR1; this interaction does not interfere with FGF2-binding to FGFR1. Binds heparin. Heparin may promote or interfere with ANOS1-FGFR1-FGF2 complex formation depending on the sequential order of its binding to the various constituents. For instance, heparin-ANOS1 interaction favors subsequent binding to pre-existing binary FGFR1-FGF2 complex, while heparin-FGF2 complex does not interact with ANOS1-FGFR1. Post-translationally, N-glycosylated. In terms of processing, may be proteolytically cleaved at the cell surface and released from the cell surface. In terms of tissue distribution, expressed in the cerebellum (at protein level).

It is found in the cell membrane. Its subcellular location is the secreted. Its function is as follows. Has a dual branch-promoting and guidance activity, which may play an important role in the patterning of mitral and tufted cell collaterals to the olfactory cortex. Chemoattractant for fetal olfactory epithelial cells. In Homo sapiens (Human), this protein is Anosmin-1.